We begin with the raw amino-acid sequence, 220 residues long: MSSNPDLKGSSFTLSVLHLSDDQVENAVSFLQEKVNQAPTFFAAAPVVINISKVAGDIDFLQLKEGISQAGMIPVGVAGCSDKRMQNLAKEAGFAVMTASKSPSQAPAKMAPIKVVRTPIRSGQQVYAKDGDLLILSHVSAGAEVIADGSIHIHGTLRGRAIAGASGQTEAKIICNDLQAELVSIAGNYWLSDQIESEYWQKKTMFSMANDVLHVDVLAI.

Belongs to the MinC family. Interacts with MinD and FtsZ.

Its function is as follows. Cell division inhibitor that blocks the formation of polar Z ring septums. Rapidly oscillates between the poles of the cell to destabilize FtsZ filaments that have formed before they mature into polar Z rings. Prevents FtsZ polymerization. The sequence is that of Probable septum site-determining protein MinC from Vibrio atlanticus (strain LGP32) (Vibrio splendidus (strain Mel32)).